Consider the following 361-residue polypeptide: Phosphoserine aminotransferase (361 aa).

L-glutamate is bound at residue Arg43. Residues 77-78 (AS), Trp103, Thr153, Asp173, and Gln196 contribute to the pyridoxal 5'-phosphate site. At Lys197 the chain carries N6-(pyridoxal phosphate)lysine. 238–239 (NT) serves as a coordination point for pyridoxal 5'-phosphate.

Belongs to the class-V pyridoxal-phosphate-dependent aminotransferase family. SerC subfamily. Homodimer. Pyridoxal 5'-phosphate serves as cofactor.

It localises to the cytoplasm. It catalyses the reaction O-phospho-L-serine + 2-oxoglutarate = 3-phosphooxypyruvate + L-glutamate. It carries out the reaction 4-(phosphooxy)-L-threonine + 2-oxoglutarate = (R)-3-hydroxy-2-oxo-4-phosphooxybutanoate + L-glutamate. It participates in amino-acid biosynthesis; L-serine biosynthesis; L-serine from 3-phospho-D-glycerate: step 2/3. Its pathway is cofactor biosynthesis; pyridoxine 5'-phosphate biosynthesis; pyridoxine 5'-phosphate from D-erythrose 4-phosphate: step 3/5. In terms of biological role, catalyzes the reversible conversion of 3-phosphohydroxypyruvate to phosphoserine and of 3-hydroxy-2-oxo-4-phosphonooxybutanoate to phosphohydroxythreonine. The sequence is that of Phosphoserine aminotransferase from Stutzerimonas stutzeri (Pseudomonas stutzeri).